We begin with the raw amino-acid sequence, 619 residues long: MITNKSKYYFFLILIFINFYLINCQEEYPIDQTGKCEPYIGDSQITKCSTFLPNINSIYVSANSTQKDSMKTLDNYFGLLLAVGSEKCKDSSLTYQTLCSMYLKECESFTDNSTLKTVSIPKRICRKTCNDVTKLCNIESLFNCSQNEPINNLPLCPLNYSIYDLSLVNGDSNYELQCYSPLSNDSIEIPVTNYCPFPLIYINSTDHSADEDRGYMFVSGNSNCVVPNPVPLYTPKQWDRLYDLSNSLSVLSCVGTLFLLFTFNILNKKINRFDRMNSLFNGSVFMMSLSGVIILFAGGPRALIKDGGARISVWQDPLCSATGFIFQLFSIAAILFWVVMSFELWYKIKFMTKKLDLKKYYIPFIIIVSLVFSIIPLATKNYRMIRGNMHCWVHTTKLQNSLFWIPLGIAITIGTIFIGLVMFEIHRIVSANSKGGVLKLEIKSILNVALIYLTFIYLFAFNFYMNGQEGVVYGQIESFYQCTLENDASECTIQGPSIGSLGFFIFCIRIYGVYCFILQGLNYRAYNIWKESIFFNNRFVSYIKNNILNIETSSTGSGGTSTTASATTTTTTKKHNGIDSLNIDSAFSKNNESDDEDDYDPYKKSKNNITLKDIEVSKS.

The signal sequence occupies residues 1-24 (MITNKSKYYFFLILIFINFYLINC). N-linked (GlcNAc...) asparagine glycans are attached at residues asparagine 4, asparagine 63, asparagine 112, asparagine 143, asparagine 159, asparagine 184, and asparagine 203. Residues 25–245 (QEEYPIDQTG…KQWDRLYDLS (221 aa)) lie on the Extracellular side of the membrane. One can recognise an FZ domain in the interval 31-169 (DQTGKCEPYI…YSIYDLSLVN (139 aa)). 2 cysteine pairs are disulfide-bonded: cysteine 36–cysteine 106 and cysteine 48–cysteine 99. The chain crosses the membrane as a helical span at residues 246–266 (NSLSVLSCVGTLFLLFTFNIL). Residues 267-278 (NKKINRFDRMNS) are Cytoplasmic-facing. Residues 279 to 299 (LFNGSVFMMSLSGVIILFAGG) form a helical membrane-spanning segment. Residues 300-321 (PRALIKDGGARISVWQDPLCSA) are Extracellular-facing. A helical membrane pass occupies residues 322 to 342 (TGFIFQLFSIAAILFWVVMSF). Topologically, residues 343 to 358 (ELWYKIKFMTKKLDLK) are cytoplasmic. The chain crosses the membrane as a helical span at residues 359–379 (KYYIPFIIIVSLVFSIIPLAT). Residues 380 to 402 (KNYRMIRGNMHCWVHTTKLQNSL) are Extracellular-facing. Residues 403–423 (FWIPLGIAITIGTIFIGLVMF) form a helical membrane-spanning segment. Residues 424–444 (EIHRIVSANSKGGVLKLEIKS) are Cytoplasmic-facing. A helical membrane pass occupies residues 445–465 (ILNVALIYLTFIYLFAFNFYM). Residues 466 to 497 (NGQEGVVYGQIESFYQCTLENDASECTIQGPS) are Extracellular-facing. A helical transmembrane segment spans residues 498–518 (IGSLGFFIFCIRIYGVYCFIL). Residues 519-619 (QGLNYRAYNI…TLKDIEVSKS (101 aa)) are Cytoplasmic-facing. Residues 581-605 (LNIDSAFSKNNESDDEDDYDPYKKS) are disordered.

It belongs to the G-protein coupled receptor Fz/Smo family.

It localises to the membrane. The protein is Frizzled and smoothened-like protein L (fslL) of Dictyostelium discoideum (Social amoeba).